The primary structure comprises 45 residues: Large ribosomal subunit protein bL34c (45 aa).

Residues 1 to 21 (MIQRTLTGTNRKKTKRSGFRS) are disordered. A compositionally biased stretch (basic residues) spans 10–19 (NRKKTKRSGF).

It belongs to the bacterial ribosomal protein bL34 family.

The protein localises to the plastid. It is found in the chloroplast. The polypeptide is Large ribosomal subunit protein bL34c (rpl34) (Cyanidium caldarium (Red alga)).